A 72-amino-acid polypeptide reads, in one-letter code: Large ribosomal subunit protein bL31 (72 aa).

Zn(2+)-binding residues include Cys16, Cys18, Cys37, and Cys40.

This sequence belongs to the bacterial ribosomal protein bL31 family. Type A subfamily. In terms of assembly, part of the 50S ribosomal subunit. It depends on Zn(2+) as a cofactor.

Functionally, binds the 23S rRNA. The polypeptide is Large ribosomal subunit protein bL31 (Pseudomonas fluorescens (strain Pf0-1)).